The primary structure comprises 423 residues: Anhydromevalonate phosphate decarboxylase (423 aa).

Residues Asn-134 and Glu-197 each coordinate Mn(2+). The Proton acceptor role is filled by Asp-245.

The protein belongs to the UbiD family. Prenylated FMN is required as a cofactor. The cofactor is Mn(2+).

It carries out the reaction (2E)-3-methyl-5-phosphooxypent-2-enoate + H(+) = isopentenyl phosphate + CO2. It functions in the pathway isoprenoid biosynthesis; isopentenyl diphosphate biosynthesis via mevalonate pathway. Catalyzes the conversion of trans-anhydromevalonate 5-phosphate (tAHMP) into isopentenyl phosphate. Involved in the archaeal mevalonate (MVA) pathway, which provides fundamental precursors for isoprenoid biosynthesis, such as isopentenyl diphosphate (IPP) and dimethylallyl diphosphate (DMAPP). The polypeptide is Anhydromevalonate phosphate decarboxylase (Methanothermobacter thermautotrophicus (strain ATCC 29096 / DSM 1053 / JCM 10044 / NBRC 100330 / Delta H) (Methanobacterium thermoautotrophicum)).